The following is a 1072-amino-acid chain: Integrin alpha-6 (1072 aa).

An N-terminal signal peptide occupies residues 1 to 18 (MAAALLLYLPLLPGLAGA). At 19–1010 (FNLDAENVIG…FPAKPVALYT (992 aa)) the chain is on the extracellular side. FG-GAP repeat units lie at residues 23–88 (AENV…DTRC), 94–160 (DEDT…IKDD), 170–223 (DGRL…FYDL), 238–295 (RQDK…QRAL), 296–357 (SLEH…KWEG), 358–413 (IKPI…GINT), and 414–476 (EPAQ…VQPD). A glycan (N-linked (GlcNAc...) asparagine) is linked at asparagine 71. 3 disulfide bridges follow: cysteine 79–cysteine 88, cysteine 125–cysteine 148, and cysteine 169–cysteine 182. Residues asparagine 217 and asparagine 278 are each glycosylated (N-linked (GlcNAc...) asparagine). Ca(2+) contacts are provided by aspartate 318, asparagine 320, aspartate 322, and aspartate 326. N-linked (GlcNAc...) asparagine glycosylation occurs at asparagine 364. Aspartate 380, asparagine 382, aspartate 384, tyrosine 386, aspartate 388, aspartate 438, aspartate 440, asparagine 442, tyrosine 444, and aspartate 446 together coordinate Ca(2+). Cysteine 498 and cysteine 557 are joined by a disulfide. Residues asparagine 515 and asparagine 609 are each glycosylated (N-linked (GlcNAc...) asparagine). Disulfide bonds link cysteine 625-cysteine 631 and cysteine 725-cysteine 736. Asparagine 730, asparagine 747, and asparagine 780 each carry an N-linked (GlcNAc...) asparagine glycan. Disulfide bonds link cysteine 880–cysteine 927 and cysteine 933–cysteine 938. N-linked (GlcNAc...) asparagine glycosylation is present at asparagine 957. A helical membrane pass occupies residues 1011–1036 (GVPWWIIAVAIFAGVLMLALLVFLLW). At 1037 to 1072 (KCGFFKRSKKDHYDATYHKAEIHAQPSDKERLTSDA) the chain is on the cytoplasmic side. Cysteine 1038 is lipidated: S-palmitoyl cysteine; by DHHC3. The GFFKR motif signature appears at 1039 to 1043 (GFFKR). The residue at position 1070 (serine 1070) is a Phosphoserine; by CaMK2.

This sequence belongs to the integrin alpha chain family. In terms of assembly, heterodimer of an alpha and a beta subunit. The alpha subunit is composed of a heavy and a light chain linked by a disulfide bond. Alpha-6 associates with either beta-1 (ITGB1) or beta-4 (ITGB4) to form ITGA6:ITGB1 and ITGA6:ITGB4, respectively. In terms of processing, phosphorylated in vivo.

It localises to the cell membrane. Functionally, integrin alpha-6/beta-1 (ITGA6:ITGB1) is a receptor for laminin on platelets. Integrin alpha-6/beta-1 (ITGA6:ITGB1) is present in oocytes and is involved in sperm-egg fusion. Integrin alpha-6/beta-4 (ITGA6:ITGB4) is a receptor for laminin in epithelial cells and it plays a critical structural role in the hemidesmosome. This is Integrin alpha-6 (ITGA6) from Gallus gallus (Chicken).